Here is a 745-residue protein sequence, read N- to C-terminus: MKESFYIEGMTCTACSSGIERSLGRKSFVKKIEVNLLNKSANIEFNENETNLDEIFKLIEKLGYSPKKTLAEEKKEFFSPNVKLALAVIFTLFVVYLSMGAMLSPSLLPKSLLAIDNHSNFLNACLQLIGTLIVMHWGRDFYIQGFKALWHRQPNMSSLIAIGTSAALISSLWQLYLVYTDHYTDQWSYGHYYFESVCVILMFVMVGKRIENVSKDKALDAMQALMKNAPKTALKIQNDQQIEVLVDSIVVGDILKVLPGTLIAVDGEIIEGEGELDESMLSGEALPVYKKVGDKVFSGTFNSHTSFLMKATQNNKNSTLSQIVEMIHNAQSSKAEISRLADKVSSVFVPSVIAIAILAFVVWLIIAPKPDFWWNFGIALEVFVSVLVISCPCALGLATLMSILVANQKASSLGLFFKDAKSLEKARLVNTIVFDKTGTLTNGKPVVKSVHSKIELLELLSLANSIEKSSEHVIAKGIVEYAKEHNAPLKEMSEVKVKTGFGISAKTDYQGTKEIIKVGNSEFFNPINTLEIQENGILVLVGRAINEKEDELLGAFVLEDLPKKGVKEHVAQIKNLGINTFLLSGDNRENVKKCALELGIDGYISNAKPQDKLNKIKELKEKGRIVMMVGDGLNDAPSLAMSDVAVVMAKGSDVSVQAADIVSFNNDIKSVYSAIKLSQATIKNIKENLFWAFCYNSVFIPLACGVLYKANIMLSPAIAGLAMSLSSVSVVLNSQRLRNFKIKDH.

The HMA domain occupies 1-67; sequence MKESFYIEGM…LIEKLGYSPK (67 aa). Over 1 to 83 the chain is Cytoplasmic; that stretch reads MKESFYIEGM…KKEFFSPNVK (83 aa). Cysteine 12 and cysteine 15 together coordinate Cu cation. The chain crosses the membrane as a helical span at residues 84 to 104; the sequence is LALAVIFTLFVVYLSMGAMLS. At 105–124 the chain is on the extracellular side; that stretch reads PSLLPKSLLAIDNHSNFLNA. The chain crosses the membrane as a helical span at residues 125 to 144; it reads CLQLIGTLIVMHWGRDFYIQ. Residues 145–151 are Cytoplasmic-facing; it reads GFKALWH. A helical membrane pass occupies residues 152–172; the sequence is RQPNMSSLIAIGTSAALISSL. The Extracellular portion of the chain corresponds to 173–194; sequence WQLYLVYTDHYTDQWSYGHYYF. The chain crosses the membrane as a helical span at residues 195–215; it reads ESVCVILMFVMVGKRIENVSK. Over 216-343 the chain is Cytoplasmic; it reads DKALDAMQAL…KAEISRLADK (128 aa). A helical transmembrane segment spans residues 344-366; sequence VSSVFVPSVIAIAILAFVVWLII. Residues 367–379 lie on the Extracellular side of the membrane; it reads APKPDFWWNFGIA. Residues 380-397 form a helical membrane-spanning segment; it reads LEVFVSVLVISCPCALGL. Residues 398 to 685 lie on the Cytoplasmic side of the membrane; that stretch reads ATLMSILVAN…KLSQATIKNI (288 aa). Aspartate 435 (4-aspartylphosphate intermediate) is an active-site residue. Aspartate 631 and aspartate 635 together coordinate Mg(2+). A helical transmembrane segment spans residues 686–705; sequence KENLFWAFCYNSVFIPLACG. Residues 706–716 lie on the Extracellular side of the membrane; sequence VLYKANIMLSP. The chain crosses the membrane as a helical span at residues 717-735; that stretch reads AIAGLAMSLSSVSVVLNSQ. Residues 736-745 lie on the Cytoplasmic side of the membrane; it reads RLRNFKIKDH.

Belongs to the cation transport ATPase (P-type) (TC 3.A.3) family. Type IB subfamily.

It localises to the cell membrane. The catalysed reaction is Cu(2+)(in) + ATP + H2O = Cu(2+)(out) + ADP + phosphate + H(+). In terms of biological role, probably involved in copper export. The protein is Copper-transporting ATPase (copA) of Helicobacter pylori (Campylobacter pylori).